A 159-amino-acid polypeptide reads, in one-letter code: 2-C-methyl-D-erythritol 2,4-cyclodiphosphate synthase (159 aa).

Residues Asp-8 and His-10 each coordinate a divalent metal cation. Residues 8 to 10 (DVH) and 34 to 35 (HS) each bind 4-CDP-2-C-methyl-D-erythritol 2-phosphate. Residue His-42 coordinates a divalent metal cation. 4-CDP-2-C-methyl-D-erythritol 2-phosphate is bound by residues 56 to 58 (DIG), 61 to 65 (FPDTD), 100 to 106 (AQAPKML), 132 to 135 (TTTE), Phe-139, and Arg-142.

This sequence belongs to the IspF family. As to quaternary structure, homotrimer. A divalent metal cation serves as cofactor.

It carries out the reaction 4-CDP-2-C-methyl-D-erythritol 2-phosphate = 2-C-methyl-D-erythritol 2,4-cyclic diphosphate + CMP. Its pathway is isoprenoid biosynthesis; isopentenyl diphosphate biosynthesis via DXP pathway; isopentenyl diphosphate from 1-deoxy-D-xylulose 5-phosphate: step 4/6. Functionally, involved in the biosynthesis of isopentenyl diphosphate (IPP) and dimethylallyl diphosphate (DMAPP), two major building blocks of isoprenoid compounds. Catalyzes the conversion of 4-diphosphocytidyl-2-C-methyl-D-erythritol 2-phosphate (CDP-ME2P) to 2-C-methyl-D-erythritol 2,4-cyclodiphosphate (ME-CPP) with a corresponding release of cytidine 5-monophosphate (CMP). In Escherichia coli O81 (strain ED1a), this protein is 2-C-methyl-D-erythritol 2,4-cyclodiphosphate synthase.